A 101-amino-acid chain; its full sequence is Acylphosphatase (101 aa).

Residues 11-99 enclose the Acylphosphatase-like domain; it reads SWLVKAIGRV…PRLNRFDRLP (89 aa). Residues R26 and N44 contribute to the active site.

This sequence belongs to the acylphosphatase family.

It carries out the reaction an acyl phosphate + H2O = a carboxylate + phosphate + H(+). In Polaromonas naphthalenivorans (strain CJ2), this protein is Acylphosphatase (acyP).